Reading from the N-terminus, the 557-residue chain is MSLIKKKNKDIRIIPLGGVGEIAKNMYIVEVDDEMFMLDAGLMFPEDEMLGIDIVIPDISYVLENKDKLKGIFLTHGHEHAIGAVSYVLEQLDAPVYGSKLTIALIKENMKARNIDKKVRYYTVNNDSIMRFKNVNISFFNTTHSIPDSLGVCIHTSYGAIVYTGEFKFDQSLHGHYAPDIKRMAEIGEEGVFVLISDSTEAEKPGYNTPENVIEHHMYDAFAKVRGRLIVSCYASNFIRIQQVLNIASKLNRKVSFLGRSLESSFNIARKMGYFDIPKDLLIPITEVDNYPKNEVIIIATGMQGEPVEALSQMAQHKHKIMNIEEGDSVFLAITASANMEVIIANTLNELVRAGAHIIPNNKKIHASSHGCMEELKMMINIMKPEYFIPVQGEFKMQIAHAKLAAEAGVAPEKIFLVEKGDVINYNGKDMILNEKVNSGNILIDGIGIGDVGNIVLRDRHLLAEDGIFIAVVTLDPKNRRIAAGPEIQSRGFVYVRESEDLLREAEEKVREIVEAGLQEKRIEWSEIKQNMRDQISKLLFESTKRRPMIIPVISEI.

Zn(2+) contacts are provided by H76, H78, H144, and E166. Residue 366-370 (HASSH) coordinates substrate.

It belongs to the metallo-beta-lactamase superfamily. RNA-metabolizing metallo-beta-lactamase-like family. Bacterial RNase J subfamily. Homodimer. Component of a possible RNA degradosome complex composed of cshA, eno, pfkA, pnp, rnjA, rnjB, rnpA and rny. Interacts specifically with RNase J1. Zn(2+) serves as cofactor.

It localises to the cytoplasm. An RNase that has 5'-3' exonuclease and endonuclease activity, with the exonuclease activity probably being most important in vivo. Involved in maturation of 16S rRNA, rnpB (the RNA component of RNase P) maturation and degradation, and mRNA maturation and/or decay. This subunit probably plays a structural rather than enzymatic role as mutation of its putative active site gives no phenotype, and its deletion is partially complemented by inactive RNase J1. The protein is Ribonuclease J 2 of Staphylococcus aureus (strain NCTC 8325 / PS 47).